Here is a 201-residue protein sequence, read N- to C-terminus: MSLAPKMSKAFIGKPAPQFKTQAVVDGEFVDVSLSDYKGKYVVLFFYPLDFTFVCPTEIIAFSDRAEEFKAINTVVLAASTDSVFSHLAWINQPRKHGGLGEMNIPVLADTNHQISRDYGVLKEDEGIAFRGLFIIDPSQNLRQITINDLPVGRSVDETLRLVQAFQFVEKHGEVCPAGWTPGSDTIKPGVKESQEYFKKH.

One can recognise a Thioredoxin domain in the interval 10 to 168 (AFIGKPAPQF…TLRLVQAFQF (159 aa)). Cys-55 functions as the Cysteine sulfenic acid (-SOH) intermediate in the catalytic mechanism.

Belongs to the peroxiredoxin family. AhpC/Prx1 subfamily. Monomer and homodimer; disulfide-linked. Under nonstress conditions, present in the reduced monomeric form. Forms active hyperoxidized monomers and disulfide-linked homodimers upon oxidation by hydrogen peroxide. Forms active oxidized homodimers in response to the drug metformin. Post-translationally, the enzyme can be inactivated by further oxidation of the cysteine sulfenic acid (C(P)-SOH) to sulphinic acid (C(P)-SO2H) instead of its condensation to a disulfide bond. As to expression, expressed in the gonad, neurons and intestine (at protein level). Expressed in the pharyngeal inter-neuron I4 and the sensory interneuron I2. Expressed in the intestine, pharyngeal muscle 1, vulval muscle, body wall muscle, epithelial cells e1 and e3, and neurons in the head and tail.

The protein resides in the cytoplasm. The catalysed reaction is a hydroperoxide + [thioredoxin]-dithiol = an alcohol + [thioredoxin]-disulfide + H2O. Its activity is regulated as follows. Activated following oxidation of the conserved redox-active cysteine residue, which subsequently allows for the oxidation and activation of substrates. Its function is as follows. Thiol-specific peroxidase that catalyzes the reduction of hydrogen peroxide and organic hydroperoxides to water and alcohols, respectively. In I2 pharyngeal neurons, required for the inhibition of feeding in response to light and hydrogen peroxide. In the intestine, plays a role in protecting cells against oxidative stress by detoxifying peroxides such as hydrogen peroxide. In addition, plays a role in the recovery from oxidative stress induced by hydrogen peroxide. In its hyperoxidized form (induced by hydrogen peroxide), confers protection against heat stress. However, has a low tendency for overoxidation during the normal lifespan. Increases sensitivity to cytotoxicity caused by metalloids and heavy metals such as arsenic and cadmium by playing a role in inhibiting the expression of phase II detoxification genes such as gcs-1 in intestinal cells. In addition, in response to arsenite, promotes the secretion of the insulin ligand daf-28 into the pseudocoelom, which negatively regulates the activities of daf-16 and skn-1. Plays a role in promoting longevity. Plays a role in the mitohormetic pathway by promoting the activation of pmk-1 in response to the drug metformin. This is Peroxiredoxin prdx-2 from Caenorhabditis elegans.